A 294-amino-acid polypeptide reads, in one-letter code: N-acetylmuramic acid 6-phosphate etherase (294 aa).

One can recognise an SIS domain in the interval 54 to 217 (VIQSFEEEGR…STASMIGVGK (164 aa)). The active-site Proton donor is the glutamate 82. Glutamate 113 is an active-site residue.

Belongs to the GCKR-like family. MurNAc-6-P etherase subfamily. As to quaternary structure, homodimer.

The catalysed reaction is N-acetyl-D-muramate 6-phosphate + H2O = N-acetyl-D-glucosamine 6-phosphate + (R)-lactate. It functions in the pathway amino-sugar metabolism; N-acetylmuramate degradation. Specifically catalyzes the cleavage of the D-lactyl ether substituent of MurNAc 6-phosphate, producing GlcNAc 6-phosphate and D-lactate. This is N-acetylmuramic acid 6-phosphate etherase from Bacillus cereus (strain ZK / E33L).